The chain runs to 671 residues: MESIEQQLTELRTTLRHHEYLYHVMDAPEIPDAEYDRLMRELRELETKHPELITPDSPTQRVGAAPLAAFSQIRHEVPMLSLDNVFDEESFLAFNKRVQDRLKSNEKVTWCCELKLDGLAVSILYENGVLVSAATRGDGTTGEDITSNVRTILAIPLKLHGENIPARLEVRGEVFLPQAGFEKINEDARRTGGKVFANPRNAAAGSLRQLDPRITAKRPLTFFCYGVGVLEGSELPDTHLGRLLQFKKWGLPVSDRVTLCESAEEVLVFYHKVEEDRPTLGFDIDGVVIKVNSLAQQEQLGFVARAPRWAVAFKFPAQEQMTFVRDVEFQVGRTGAITPVARLEPVHVAGVLVSNATLHNADEIERLGLRIGDKVVIRRAGDVIPQVVNVVLSERPEDSREVVFPTHCPVCGSDVERVEGEAVARCTGGLICGAQRKESLKHFVSRRAMDVDGMGDKIIDQLVEKEYVHTPADLFKLTAGKLTGLERMGPKSAQNVVNALEKAKETTFARFLYALGIREVGEATAAGLAAYFGTLEALEAASIEELQKVPDVGIVVASHVHNFFAEESNRNVISELLAEGVHWPAPIVINAEEIDSPFAGKTVVLTGSLSQMSRDDAKARLVELGAKVAGSVSKKTDLVIAGEAAGSKLAKAQELGIEVIDEAEMLRLLGS.

NAD(+) contacts are provided by residues 32 to 36 (DAEYD), 81 to 82 (SL), and glutamate 113. Lysine 115 (N6-AMP-lysine intermediate) is an active-site residue. Positions 136, 173, 290, and 314 each coordinate NAD(+). Zn(2+) contacts are provided by cysteine 408, cysteine 411, cysteine 426, and cysteine 432. One can recognise a BRCT domain in the interval 593 to 671 (EIDSPFAGKT…EAEMLRLLGS (79 aa)).

The protein belongs to the NAD-dependent DNA ligase family. LigA subfamily. Mg(2+) is required as a cofactor. Requires Mn(2+) as cofactor.

It catalyses the reaction NAD(+) + (deoxyribonucleotide)n-3'-hydroxyl + 5'-phospho-(deoxyribonucleotide)m = (deoxyribonucleotide)n+m + AMP + beta-nicotinamide D-nucleotide.. Its function is as follows. DNA ligase that catalyzes the formation of phosphodiester linkages between 5'-phosphoryl and 3'-hydroxyl groups in double-stranded DNA using NAD as a coenzyme and as the energy source for the reaction. It is essential for DNA replication and repair of damaged DNA. This Shigella dysenteriae serotype 1 (strain Sd197) protein is DNA ligase.